We begin with the raw amino-acid sequence, 1117 residues long: Cytospin-A (1117 aa).

Disordered regions lie at residues 1 to 176, 293 to 323, and 358 to 390; these read MKKA…NQIS, SLSP…GSVE, and SSDD…NASE. Low complexity-rich tracts occupy residues 45–72 and 99–119; these read TTAS…TNGV and KIST…NKES. Composition is skewed to basic and acidic residues over residues 120 to 131 and 158 to 171; these read SSTRERLRERTR and TTTE…KSKS. A coiled-coil region spans residues 168–280; the sequence is KSKSDNQISD…LNALGFSLEQ (113 aa). Residues 293-303 show a composition bias toward polar residues; sequence SLSPEITPGNQ. A compositionally biased stretch (low complexity) spans 358-377; the sequence is SSDDALDAPSSSESEGIPSI. S384, S385, and S389 each carry phosphoserine. 2 coiled-coil regions span residues 394-449 and 487-807; these read ACLT…MESL and RYME…RGRV. The segment at 852-878 is disordered; sequence SQVPNPTAAAIPRTPLSPSPMKTPPAA. Phosphoserine occurs at positions 868, 881, and 887. The segment at 920–997 is disordered; sequence TSSTSRPASL…PTTRSRIREE (78 aa). Residues 946-956 are compositionally biased toward basic and acidic residues; sequence RSSEEMKRDIS. The segment covering 971–990 has biased composition (low complexity); that stretch reads TTSPQLSLSSSPTASVTPTT. One can recognise a Calponin-homology (CH) domain in the interval 1011-1116; the sequence is GSKRNALLKW…YVTAIYKYFE (106 aa).

It belongs to the cytospin-A family. In terms of assembly, may interact with both microtubules and actin cytoskeleton.

It is found in the cytoplasm. The protein resides in the cytoskeleton. It localises to the spindle. The protein localises to the cell junction. Its subcellular location is the gap junction. Functionally, involved in cytokinesis and spindle organization. May play a role in actin cytoskeleton organization and microtubule stabilization and hence required for proper cell adhesion and migration. This is Cytospin-A (SPECC1L) from Canis lupus familiaris (Dog).